The following is a 454-amino-acid chain: NEDD8-activating enzyme E1 catalytic subunit (454 aa).

Alanine 2 carries the post-translational modification N-acetylalanine. ATP is bound at residue glycine 56 to arginine 80. Residue cysteine 215 is the Glycyl thioester intermediate of the active site.

This sequence belongs to the ubiquitin-activating E1 family. UBA3 subfamily. As to quaternary structure, heterodimer of UBA3/ECR1 and AXR1. Interacts with NEDD8 and RCE1. As to expression, expressed in shoot, root and floral meristems, in vascular tissues of cotyledons and mature leaves, and in the stele of the root.

Its subcellular location is the nucleus. The catalysed reaction is ATP + [NEDD8 protein] + [E1 NEDD8-activating enzyme]-L-cysteine = AMP + diphosphate + [E1 NEDD8-activating enzyme]-S-[NEDD8 protein]-yl-L-cysteine.. It functions in the pathway protein modification; protein neddylation. In terms of biological role, catalytic subunit of the dimeric ECR1-AXR1 E1 enzyme. E1 activates NEDD8/RUB1 by first adenylating its C-terminal glycine residue with ATP, thereafter linking this residue to the side chain of the catalytic cysteine, yielding a NEDD8-ECR1 thioester and free AMP. E1 finally transfers NEDD8 to the catalytic cysteine of RCE1. This Arabidopsis thaliana (Mouse-ear cress) protein is NEDD8-activating enzyme E1 catalytic subunit (ECR1).